The primary structure comprises 265 residues: Auxin-responsive protein IAA22 (265 aa).

Disordered regions lie at residues 54–88 (LSTP…ERRP) and 172–199 (DGRE…SPAM). Positions 65–88 (LMNKMKPCSDEGHGSRDAAQERRP) are enriched in basic and acidic residues. The region spanning 91-194 (TMFVKVNLEG…GVDQVSERPD (104 aa)) is the PB1 domain.

Belongs to the Aux/IAA family. In terms of assembly, homodimers and heterodimers. Highly expressed in flowers. Expressed in roots and seedlings.

The protein resides in the nucleus. Its function is as follows. Aux/IAA proteins are short-lived transcriptional factors that function as repressors of early auxin response genes at low auxin concentrations. The sequence is that of Auxin-responsive protein IAA22 (IAA22) from Oryza sativa subsp. japonica (Rice).